A 107-amino-acid polypeptide reads, in one-letter code: Integration host factor subunit alpha (107 aa).

This sequence belongs to the bacterial histone-like protein family. As to quaternary structure, heterodimer of an alpha and a beta chain.

Its function is as follows. This protein is one of the two subunits of integration host factor, a specific DNA-binding protein that functions in genetic recombination as well as in transcriptional and translational control. The protein is Integration host factor subunit alpha of Brucella suis (strain ATCC 23445 / NCTC 10510).